Reading from the N-terminus, the 605-residue chain is Conglutin beta 7 (605 aa).

The N-terminal stretch at 1 to 30 (MARMRVRFPTLVLLLGILFLMAVSIGIAYG) is a signal peptide. The segment covering 37–105 (NHERPGEREH…REPCREREQE (69 aa)) has biased composition (basic and acidic residues). 3 disordered regions span residues 37–193 (NHER…RFQT), 346–367 (LGNE…SYQD), and 382–405 (LRKH…NLRS). Positions 140 to 149 (QGSSSSSRKQ) are enriched in low complexity. A compositionally biased stretch (basic and acidic residues) spans 150–179 (SGYERRQYHERREQRDEKEKEQDSRSDSRR). Residues 184–342 (YHFSSERFQT…TFNTRYEEIQ (159 aa)) enclose the Cupin type-1 1 domain. The Cupin type-1 2 domain maps to 401–563 (FNLRSNESIY…TFPGSAQDVE (163 aa)). Residues N406 and N513 are each glycosylated (N-linked (GlcNAc...) asparagine). The interval 574-593 (FANAQPQQKQQREKEGRRGR) is disordered.

Belongs to the 7S seed storage protein family. As to quaternary structure, component of globulins complexes which accumulate in seeds.

Functionally, seed storage protein. Accumulates during seed development and is hydrolyzed after germination to provide a carbon and nitrogen source for the developing seedling. The protein is Conglutin beta 7 of Lupinus angustifolius (Narrow-leaved blue lupine).